Here is a 517-residue protein sequence, read N- to C-terminus: Heat shock 70-related protein 5 (517 aa).

Belongs to the heat shock protein 70 family.

Functionally, may function in protein folding and assembly, and disassembly of protein complexes. The polypeptide is Heat shock 70-related protein 5 (Dictyostelium discoideum (Social amoeba)).